The following is a 189-amino-acid chain: GTP cyclohydrolase 1 (189 aa).

Residues Cys-78, His-81, and Cys-150 each contribute to the Zn(2+) site.

This sequence belongs to the GTP cyclohydrolase I family. As to quaternary structure, homomer.

The enzyme catalyses GTP + H2O = 7,8-dihydroneopterin 3'-triphosphate + formate + H(+). The protein operates within cofactor biosynthesis; 7,8-dihydroneopterin triphosphate biosynthesis; 7,8-dihydroneopterin triphosphate from GTP: step 1/1. In Bacillus mycoides (strain KBAB4) (Bacillus weihenstephanensis), this protein is GTP cyclohydrolase 1.